The following is a 188-amino-acid chain: Elongation factor P (188 aa).

The protein belongs to the elongation factor P family.

The protein resides in the cytoplasm. It participates in protein biosynthesis; polypeptide chain elongation. In terms of biological role, involved in peptide bond synthesis. Stimulates efficient translation and peptide-bond synthesis on native or reconstituted 70S ribosomes in vitro. Probably functions indirectly by altering the affinity of the ribosome for aminoacyl-tRNA, thus increasing their reactivity as acceptors for peptidyl transferase. The polypeptide is Elongation factor P (Rickettsia africae (strain ESF-5)).